A 512-amino-acid polypeptide reads, in one-letter code: Cobyric acid synthase (512 aa).

The region spanning 254 to 455 (EIDIAVVKLP…LHGLFDNKAL (202 aa)) is the GATase cobBQ-type domain. Cysteine 335 acts as the Nucleophile in catalysis. Histidine 447 is a catalytic residue.

The protein belongs to the CobB/CobQ family. CobQ subfamily.

It functions in the pathway cofactor biosynthesis; adenosylcobalamin biosynthesis. Catalyzes amidations at positions B, D, E, and G on adenosylcobyrinic A,C-diamide. NH(2) groups are provided by glutamine, and one molecule of ATP is hydrogenolyzed for each amidation. The sequence is that of Cobyric acid synthase from Desulforamulus reducens (strain ATCC BAA-1160 / DSM 100696 / MI-1) (Desulfotomaculum reducens).